A 214-amino-acid chain; its full sequence is Ribosomal RNA small subunit methyltransferase G (214 aa).

S-adenosyl-L-methionine is bound by residues glycine 81, methionine 86, 132 to 133 (AE), and arginine 147.

This sequence belongs to the methyltransferase superfamily. RNA methyltransferase RsmG family.

It is found in the cytoplasm. It catalyses the reaction guanosine(527) in 16S rRNA + S-adenosyl-L-methionine = N(7)-methylguanosine(527) in 16S rRNA + S-adenosyl-L-homocysteine. In terms of biological role, specifically methylates the N7 position of guanine in position 527 of 16S rRNA. This chain is Ribosomal RNA small subunit methyltransferase G, found in Pseudomonas syringae pv. syringae (strain B728a).